A 776-amino-acid polypeptide reads, in one-letter code: Glucocorticoid receptor (776 aa).

Polar residues predominate over residues M1–S11. Positions M1–N25 are disordered. A modulating region spans residues M1–F419. A Phosphothreonine modification is found at T8. R23 bears the Omega-N-methylarginine mark. Phosphoserine is present on residues S45, S113, and S134. The tract at residues P157–G178 is disordered. Over residues S161–T174 the composition is skewed to polar residues. Residues S203, S211, and S226 each carry the phosphoserine modification. K258 participates in a covalent cross-link: Glycyl lysine isopeptide (Lys-Gly) (interchain with G-Cter in SUMO2). S267 carries the phosphoserine modification. Residues K277 and K293 each participate in a glycyl lysine isopeptide (Lys-Gly) (interchain with G-Cter in SUMO); alternate cross-link. Residues K277 and K293 each participate in a glycyl lysine isopeptide (Lys-Gly) (interchain with G-Cter in SUMO2); alternate cross-link. Residues S307 and S404 each carry the phosphoserine modification. A DNA-binding region (nuclear receptor) is located at residues P417–T492. A Glycyl lysine isopeptide (Lys-Gly) (interchain with G-Cter in ubiquitin) cross-link involves residue K418. 2 NR C4-type zinc fingers span residues C420–C440 and C456–C480. K479, K491, K493, and K494 each carry N6-acetyllysine. Residues G484–K776 are interaction with CLOCK. The interval N486 to A522 is hinge. Residues T523–T757 enclose the NR LBD domain. The interaction with CRY1 stretch occupies residues P531–L696. Residue K702 forms a Glycyl lysine isopeptide (Lys-Gly) (interchain with G-Cter in SUMO) linkage.

The protein belongs to the nuclear hormone receptor family. NR3 subfamily. Heteromultimeric cytoplasmic complex with HSP90AA1, HSPA1A/HSPA1B, and FKBP5 or another immunophilin such as PPID, STIP1, or the immunophilin homolog PPP5C. Upon ligand binding FKBP5 dissociates from the complex and FKBP4 takes its place, thereby linking the complex to dynein and mediating transport to the nucleus, where the complex dissociates. Probably forms a complex composed of chaperones HSP90 and HSP70, co-chaperones CDC37, PPP5C, TSC1 and client protein TSC2, CDK4, AKT, RAF1 and NR3C1; this complex does not contain co-chaperones STIP1/HOP and PTGES3/p23. Directly interacts with UNC45A. Binds to DNA as a homodimer, and as heterodimer with NR3C2 or the retinoid X receptor. Binds STAT5A and STAT5B homodimers and heterodimers. Interacts with NRIP1, POU2F1, POU2F2 and TRIM28. Interacts with several coactivator complexes, including the SMARCA4 complex, CREBBP/EP300, TADA2L (Ada complex) and p160 coactivators such as NCOA2 and NCOA6. Interaction with BAG1 inhibits transactivation. Interacts with HEXIM1 and TGFB1I1. Interacts with NCOA1. Interacts with NCOA3, SMARCA4, SMARCC1, SMARCD1, and SMARCE1. Interacts with CLOCK, CRY1 and CRY2 in a ligand-dependent fashion. Interacts with CIART. Interacts with RWDD3. Interacts with UBE2I/UBC9 and this interaction is enhanced in the presence of RWDD3. Interacts with GRIP1. Interacts with NR4A3 (via nuclear receptor DNA-binding domain), represses transcription activity of NR4A3 on the POMC promoter Nur response element (NurRE). Directly interacts with PNRC2 to attract and form a complex with UPF1 and DCP1A; the interaction leads to rapid mRNA degradation. Interacts with GSK3B. Interacts with FNIP1 and FNIP2. Interacts (via C-terminus) with NR3C1 (via C-terminus). Interacts with MCM3AP. Interacts (via domain NR LBD) with HSP90AA1 and HSP90AB1. In the absence of hormonal ligand, interacts with TACC1. Acetylation by CLOCK reduces its binding to glucocorticoid response elements and its transcriptional activity. In terms of processing, increased proteasome-mediated degradation in response to glucocorticoids. Post-translationally, phosphorylated in the absence of hormone; becomes hyperphosphorylated in the presence of glucocorticoid. The Ser-203, Ser-226 and Ser-404-phosphorylated forms are mainly cytoplasmic, and the Ser-211-phosphorylated form is nuclear. Phosphorylation at Ser-211 increases transcriptional activity. Phosphorylation at Ser-203, Ser-226 and Ser-404 decreases signaling capacity. Phosphorylation at Ser-404 may protect from glucocorticoid-induced apoptosis. Phosphorylation at Ser-203 and Ser-211 is not required in regulation of chromosome segregation. May be dephosphorylated by PPP5C, attenuates NR3C1 action. Sumoylation at Lys-277 and Lys-293 negatively regulates its transcriptional activity. Sumoylation at Lys-702 positively regulates its transcriptional activity in the presence of RWDD3. Sumoylation at Lys-277 and Lys-293 is dispensable whereas sumoylation at Lys-702 is critical for the stimulatory effect of RWDD3 on its transcriptional activity. Heat shock increases sumoylation in a RWDD3-dependent manner. In terms of processing, ubiquitinated by UBR5, leading to its degradation: UBR5 specifically recognizes and binds ligand-bound NR3C1 when it is not associated with coactivators (NCOAs). In presence of NCOAs, the UBR5-degron is not accessible, preventing its ubiquitination and degradation.

The protein localises to the cytoplasm. The protein resides in the nucleus. It is found in the mitochondrion. Its subcellular location is the cytoskeleton. It localises to the spindle. The protein localises to the microtubule organizing center. The protein resides in the centrosome. It is found in the chromosome. Its subcellular location is the nucleoplasm. In terms of biological role, receptor for glucocorticoids (GC). Has a dual mode of action: as a transcription factor that binds to glucocorticoid response elements (GRE), both for nuclear and mitochondrial DNA, and as a modulator of other transcription factors. Affects inflammatory responses, cellular proliferation and differentiation in target tissues. Involved in chromatin remodeling. Plays a role in rapid mRNA degradation by binding to the 5' UTR of target mRNAs and interacting with PNRC2 in a ligand-dependent manner which recruits the RNA helicase UPF1 and the mRNA-decapping enzyme DCP1A, leading to RNA decay. Could act as a coactivator for STAT5-dependent transcription upon growth hormone (GH) stimulation and could reveal an essential role of hepatic GR in the control of body growth. Mediates glucocorticoid-induced apoptosis. Promotes accurate chromosome segregation during mitosis. May act as a tumor suppressor. May play a negative role in adipogenesis through the regulation of lipolytic and antilipogenic gene expression. The sequence is that of Glucocorticoid receptor (NR3C1) from Tupaia belangeri (Common tree shrew).